The following is a 97-amino-acid chain: HssA/B-like protein 32 (97 aa).

2 disordered regions span residues 1–23 (MTLF…SLAS) and 62–97 (AKSS…GSCS). Over residues 62–74 (AKSSGGSCGGKGG) the composition is skewed to gly residues. The span at 75-88 (SHNHGHGHGPHGHG) shows a compositional bias: basic residues.

It belongs to the hssA/B family.

This is HssA/B-like protein 32 (hssl32) from Dictyostelium discoideum (Social amoeba).